A 70-amino-acid chain; its full sequence is U2-agatoxin-Ao1b (70 aa).

The signal sequence occupies residues 1 to 20 (MRAIISLILISAMVFSMIAA). The propeptide occupies 21–34 (VPEEEGLQLSEDER). 3 disulfide bridges follow: C37-C53, C44-C58, and C52-C68. Position 69 is a leucine amide (L69).

The protein belongs to the neurotoxin 01 (U2-agtx) family. As to expression, expressed by the venom gland.

The protein localises to the secreted. Insect active toxin causing rapid but reversible paralysis in crickets. No activity shown in mammals. Does not show effect on mammalian voltage-gated calcium channels. In Agelena orientalis (Funnel-web spider), this protein is U2-agatoxin-Ao1b.